A 159-amino-acid polypeptide reads, in one-letter code: Ribosomal RNA large subunit methyltransferase H (159 aa).

S-adenosyl-L-methionine-binding positions include Leu-76, Gly-108, and 127–132; that span reads FSKMTF.

Belongs to the RNA methyltransferase RlmH family. In terms of assembly, homodimer.

It localises to the cytoplasm. It carries out the reaction pseudouridine(1915) in 23S rRNA + S-adenosyl-L-methionine = N(3)-methylpseudouridine(1915) in 23S rRNA + S-adenosyl-L-homocysteine + H(+). In terms of biological role, specifically methylates the pseudouridine at position 1915 (m3Psi1915) in 23S rRNA. This is Ribosomal RNA large subunit methyltransferase H from Bacillus velezensis (strain DSM 23117 / BGSC 10A6 / LMG 26770 / FZB42) (Bacillus amyloliquefaciens subsp. plantarum).